A 529-amino-acid polypeptide reads, in one-letter code: Structure-specific endonuclease subunit SLX1 homolog 1 (529 aa).

Residues 4–89 (RFHCVYLLTS…PTKSTRLKTQ (86 aa)) form the GIY-YIG domain. The segment at 231 to 364 (CALCSLPLRS…PCQPCPCPLC (134 aa)) adopts an SLX1-type zinc-finger fold. 3 disordered regions span residues 275-305 (VTMG…MDAH), 409-437 (NSSL…YCGD), and 470-501 (SVSL…RMTD). Over residues 282-297 (RNERSGEYSNKIKDDS) the composition is skewed to basic and acidic residues.

This sequence belongs to the SLX1 family. In terms of assembly, forms a heterodimer with a member of the SLX4 family. A divalent metal cation is required as a cofactor.

It is found in the nucleus. Its function is as follows. Catalytic subunit of a heterodimeric structure-specific endonuclease that resolves DNA secondary structures generated during DNA repair and recombination. Has endonuclease activity towards branched DNA substrates, introducing single-strand cuts in duplex DNA close to junctions with ss-DNA. This is Structure-specific endonuclease subunit SLX1 homolog 1 from Trypanosoma cruzi (strain CL Brener).